We begin with the raw amino-acid sequence, 106 residues long: Small ribosomal subunit protein bS16 (106 aa).

Belongs to the bacterial ribosomal protein bS16 family.

This is Small ribosomal subunit protein bS16 from Wolbachia pipientis wMel.